The sequence spans 541 residues: GMP synthase [glutamine-hydrolyzing] (541 aa).

One can recognise a Glutamine amidotransferase type-1 domain in the interval 15–209 (TILTLDFGSQ…AVNICGCKQN (195 aa)). Cys91 (nucleophile) is an active-site residue. Catalysis depends on residues His183 and Glu185. The GMPS ATP-PPase domain occupies 210–416 (WTMARFVDQE…LGIAHEMVMR (207 aa)). 238–244 (SGGVDST) serves as a coordination point for ATP. Positions 311, 478, 533, and 539 each coordinate XMP.

Homodimer. Requires Mg(2+) as cofactor.

It localises to the cytoplasm. Its subcellular location is the cytosol. It catalyses the reaction XMP + L-glutamine + ATP + H2O = GMP + L-glutamate + AMP + diphosphate + 2 H(+). It functions in the pathway purine metabolism; GMP biosynthesis; GMP from XMP (L-Gln route): step 1/1. Its function is as follows. Catalyzes the conversion of xanthine monophosphate (XMP) to GMP in the presence of glutamine and ATP through an adenyl-XMP intermediate. This chain is GMP synthase [glutamine-hydrolyzing] (gua1), found in Aspergillus oryzae (strain ATCC 42149 / RIB 40) (Yellow koji mold).